The following is a 98-amino-acid chain: Defensin-like protein 219 (98 aa).

The N-terminal stretch at 1–16 (MKTIFVFLTLAVLVSS) is a signal peptide. Intrachain disulfides connect Cys68-Cys85, Cys71-Cys90, and Cys75-Cys92.

The protein belongs to the DEFL family.

It is found in the secreted. This is Defensin-like protein 219 from Arabidopsis thaliana (Mouse-ear cress).